Reading from the N-terminus, the 297-residue chain is uncharacterized protein (297 aa).

The next 2 helical transmembrane spans lie at 17–37 and 48–68; these read LALS…KEIF and TISG…GYSI. The region spanning 17 to 196 is the PNPLA domain; the sequence is LALSGGGFYG…TLNYPITLFD (180 aa). Residues 21–26 carry the GXGXXG motif; it reads GGGFYG. A GXSXG motif is present at residues 51-55; that stretch reads GVSVG. Ser53 serves as the catalytic Nucleophile. Residue Asn122 is glycosylated (N-linked (GlcNAc...) asparagine; by host). Asp183 functions as the Proton acceptor in the catalytic mechanism. The DGA/G motif lies at 183–185; sequence DGG. Asn239 carries an N-linked (GlcNAc...) asparagine; by host glycan.

The protein resides in the membrane. Its function is as follows. Probable lipid hydrolase. This is an uncharacterized protein from Acanthamoeba polyphaga mimivirus (APMV).